The sequence spans 287 residues: MGLDNLKVGLAQMLKGGVIMDVVTPDQAKIAEDAGAVAVMALEKIPSDIRASGGVSRMSDPGLIERVMDSVSIPVMAKVRIGHFAEAQILQSLKVDYIDESEVLSVADSSYHIDKRKFTVPFVCGATNLGEALRRISEGASMIRSKGEAGTGDIAQATKHIRAILSEISALTQAREDELPARARKLGAPIDLVRETARLGRLPVVLFTAGGIATPADSSLVMQLGSDGVFVGSGIFKSEDPKAYAAAIVQATAQYDDADLLARVSRNLGQAMPGVSNLDVRFSNRGV.

Residue aspartate 21 coordinates D-ribose 5-phosphate. Lysine 78 acts as the Schiff-base intermediate with D-ribose 5-phosphate in catalysis. Glycine 150 is a D-ribose 5-phosphate binding site. Arginine 162 serves as a coordination point for D-glyceraldehyde 3-phosphate. Residues glycine 211 and 232–233 (GS) contribute to the D-ribose 5-phosphate site.

The protein belongs to the PdxS/SNZ family. In the presence of PdxT, forms a dodecamer of heterodimers.

It carries out the reaction aldehydo-D-ribose 5-phosphate + D-glyceraldehyde 3-phosphate + L-glutamine = pyridoxal 5'-phosphate + L-glutamate + phosphate + 3 H2O + H(+). Its pathway is cofactor biosynthesis; pyridoxal 5'-phosphate biosynthesis. Catalyzes the formation of pyridoxal 5'-phosphate from ribose 5-phosphate (RBP), glyceraldehyde 3-phosphate (G3P) and ammonia. The ammonia is provided by the PdxT subunit. Can also use ribulose 5-phosphate and dihydroxyacetone phosphate as substrates, resulting from enzyme-catalyzed isomerization of RBP and G3P, respectively. The sequence is that of Pyridoxal 5'-phosphate synthase subunit PdxS from Tropheryma whipplei (strain Twist) (Whipple's bacillus).